The sequence spans 558 residues: Putative transposase for insertion sequence IS1162 (558 aa).

The 83-residue stretch at 11–93 (IKECLRLKFE…PDLITIHREL (83 aa)) folds into the HTH IS408-type domain. The H-T-H motif DNA-binding region spans 23–44 (LSHEKIARALQLSKGVVSKYVT). Positions 139–336 (QQHRAGEKLF…HPYEVVTFKR (198 aa)) constitute an Integrase catalytic domain. The disordered stretch occupies residues 486–558 (QGLDQQPLPK…AAGQPQPELR (73 aa)).

It belongs to the transposase IS21/IS408/IS1162 family.

In terms of biological role, required for the transposition of the insertion element. The polypeptide is Putative transposase for insertion sequence IS1162 (Pseudomonas fluorescens).